The sequence spans 198 residues: Large ribosomal subunit protein uL13 (198 aa).

It belongs to the universal ribosomal protein uL13 family.

The chain is Large ribosomal subunit protein uL13 (RPL13A) from Tetrahymena thermophila (strain SB210).